A 347-amino-acid polypeptide reads, in one-letter code: Farnesyl pyrophosphate synthase ERG20 (347 aa).

Isopentenyl diphosphate is bound by residues Lys-50, Arg-53, and Gln-88. Asp-95 and Asp-99 together coordinate Mg(2+). Arg-104 serves as a coordination point for dimethylallyl diphosphate. Arg-105 contacts isopentenyl diphosphate. Lys-192, Thr-193, Gln-232, Lys-249, and Lys-258 together coordinate dimethylallyl diphosphate.

This sequence belongs to the FPP/GGPP synthase family. The cofactor is Mg(2+).

It carries out the reaction isopentenyl diphosphate + dimethylallyl diphosphate = (2E)-geranyl diphosphate + diphosphate. The catalysed reaction is isopentenyl diphosphate + (2E)-geranyl diphosphate = (2E,6E)-farnesyl diphosphate + diphosphate. The protein operates within isoprenoid biosynthesis; farnesyl diphosphate biosynthesis; farnesyl diphosphate from geranyl diphosphate and isopentenyl diphosphate: step 1/1. Its pathway is isoprenoid biosynthesis; geranyl diphosphate biosynthesis; geranyl diphosphate from dimethylallyl diphosphate and isopentenyl diphosphate: step 1/1. In terms of biological role, farnesyl pyrophosphate synthase; part of the second module of ergosterol biosynthesis pathway that includes the middle steps of the pathway. ERG20 catalyzes the sequential condensation of isopentenyl pyrophosphate with dimethylallyl pyrophosphate, and then with the resultant geranylpyrophosphate to the ultimate product farnesyl pyrophosphate. The second module is carried out in the vacuole and involves the formation of farnesyl diphosphate, which is also an important intermediate in the biosynthesis of ubiquinone, dolichol, heme and prenylated proteins. Activity by the mevalonate kinase ERG12 (FG05912) first converts mevalonate into 5-phosphomevalonate. 5-phosphomevalonate is then further converted to 5-diphosphomevalonate by the phosphomevalonate kinase ERG8 (FG09764). The diphosphomevalonate decarboxylase ERG19 (FG10424) then produces isopentenyl diphosphate. The isopentenyl-diphosphate delta-isomerase IDI1 (FG09722) then catalyzes the 1,3-allylic rearrangement of the homoallylic substrate isopentenyl (IPP) to its highly electrophilic allylic isomer, dimethylallyl diphosphate (DMAPP). Finally the farnesyl diphosphate synthase ERG20 (FG06784) catalyzes the sequential condensation of isopentenyl pyrophosphate with dimethylallyl pyrophosphate, and then with the resultant geranylpyrophosphate to the ultimate product farnesyl pyrophosphate. The sequence is that of Farnesyl pyrophosphate synthase ERG20 from Gibberella zeae (strain ATCC MYA-4620 / CBS 123657 / FGSC 9075 / NRRL 31084 / PH-1) (Wheat head blight fungus).